Here is a 540-residue protein sequence, read N- to C-terminus: Protein PALS2 (540 aa).

2 L27 domains span residues 1–48 (MQQV…EDSK) and 49–107 (LEAV…YDSP). A PDZ domain is found at 130 to 209 (ILGIHKRAGE…SVTLKILPSY (80 aa)). Residues 215-284 (PQQVFVKCHF…PSQFLEEKRK (70 aa)) enclose the SH3 domain. The 188-residue stretch at 338–525 (RKTLVLIGAQ…AFEKLQTAIE (188 aa)) folds into the Guanylate kinase-like domain. Tyrosine 500 carries the phosphotyrosine modification.

The protein belongs to the MAGUK family. As to quaternary structure, interacts with CADM1. Interacts with the LIN7 proteins. In terms of tissue distribution, abundant in testis, brain, and kidney with lower levels detectable in other tissues.

It localises to the membrane. The protein is Protein PALS2 of Homo sapiens (Human).